Reading from the N-terminus, the 386-residue chain is Phosphomevalonate dehydratase large subunit (386 aa).

Glycine 48, valine 49, serine 50, asparagine 53, arginine 63, asparagine 79, and proline 80 together coordinate (R)-5-phosphomevalonate. Cysteine 110 serves as a coordination point for [4Fe-4S] cluster. Glutamate 129 and serine 130 together coordinate (R)-5-phosphomevalonate. Residues cysteine 283 and cysteine 342 each coordinate [4Fe-4S] cluster. Residue lysine 361 coordinates (R)-5-phosphomevalonate.

It belongs to the AcnX type II large subunit family. Heterodimer composed of a large subunit (PMDh-L) and a small subunit (PMDh-S). The cofactor is [4Fe-4S] cluster.

The enzyme catalyses (R)-5-phosphomevalonate = (2E)-3-methyl-5-phosphooxypent-2-enoate + H2O. It participates in isoprenoid biosynthesis; isopentenyl diphosphate biosynthesis via mevalonate pathway. Functionally, component of a hydro-lyase that catalyzes the dehydration of mevalonate 5-phosphate (MVA5P) to form trans-anhydromevalonate 5-phosphate (tAHMP). Involved in the archaeal mevalonate (MVA) pathway, which provides fundamental precursors for isoprenoid biosynthesis, such as isopentenyl diphosphate (IPP) and dimethylallyl diphosphate (DMAPP). The chain is Phosphomevalonate dehydratase large subunit from Thermococcus kodakarensis (strain ATCC BAA-918 / JCM 12380 / KOD1) (Pyrococcus kodakaraensis (strain KOD1)).